We begin with the raw amino-acid sequence, 93 residues long: Small ribosomal subunit protein uS19 (93 aa).

Belongs to the universal ribosomal protein uS19 family.

In terms of biological role, protein S19 forms a complex with S13 that binds strongly to the 16S ribosomal RNA. This Symbiobacterium thermophilum (strain DSM 24528 / JCM 14929 / IAM 14863 / T) protein is Small ribosomal subunit protein uS19.